The primary structure comprises 304 residues: DDRGK domain-containing protein 1 (304 aa).

The Lumenal segment spans residues 1–2 (MD). A helical membrane pass occupies residues 3–23 (LIILVGIAIALLVVIISLYLL). Residues 24–304 (QKKNSTTEAK…LTPVSAEGSS (281 aa)) are Cytoplasmic-facing. The segment at 31–174 (EAKPAAAAPQ…AERLAKEERE (144 aa)) is disordered. The segment covering 53–82 (RRAQIARNQRNRLRQNAPVAAAAPQAEAPA) has biased composition (low complexity). A compositionally biased stretch (basic and acidic residues) spans 105–174 (LDEKMGAKKR…AERLAKEERE (70 aa)).

The protein belongs to the DDRGK1 family. As to quaternary structure, interacts with Atg9; the interaction is transient.

It localises to the endoplasmic reticulum membrane. In terms of biological role, substrate adapter for ufmylation, the covalent attachment of the ubiquitin-like modifier UFM1 to substrate proteins. Required for ufmylation of Atg9; protects the nervous system during aging, possibly by stabilizing Atg9 and supporting its function. The sequence is that of DDRGK domain-containing protein 1 from Drosophila ananassae (Fruit fly).